The sequence spans 515 residues: Maturase K (515 aa).

This sequence belongs to the intron maturase 2 family. MatK subfamily.

The protein localises to the plastid. It localises to the chloroplast. Its function is as follows. Usually encoded in the trnK tRNA gene intron. Probably assists in splicing its own and other chloroplast group II introns. In Pinus sibirica (Siberian pine), this protein is Maturase K.